The primary structure comprises 364 residues: Guanine nucleotide-binding protein alpha-6 subunit (364 aa).

A disordered region spans residues 1-29 (MGAGATGLRGARLSPEERANSSKSRAIDR). A lipid anchor (N-myristoyl glycine) is attached at glycine 2. Positions 14 to 29 (SPEERANSSKSRAIDR) are enriched in basic and acidic residues. The region spanning 40 to 363 (NRFKILLLGT…NENLRSAGLH (324 aa)) is the G-alpha domain. The tract at residues 43–56 (KILLLGTAESGKST) is G1 motif. Residues 48–55 (GTAESGKS), 186–192 (VHCRIST), 211–215 (DVGGQ), 280–283 (NKYD), and alanine 335 each bind GTP. Mg(2+) is bound by residues serine 55 and threonine 192. The segment at 184–192 (DIVHCRIST) is G2 motif. A G3 motif region spans residues 207–216 (FKMVDVGGQR). Positions 276–283 (VLFLNKYD) are G4 motif. A G5 motif region spans residues 333–338 (TTATDT).

This sequence belongs to the G-alpha family. In terms of assembly, g proteins are composed of 3 units; alpha, beta and gamma. The alpha chain contains the guanine nucleotide binding site.

Guanine nucleotide-binding proteins (G proteins) are involved as modulators or transducers in various transmembrane signaling systems. This Caenorhabditis elegans protein is Guanine nucleotide-binding protein alpha-6 subunit (gpa-6).